The primary structure comprises 618 residues: Matrix metalloproteinase-24 (618 aa).

An N-terminal signal peptide occupies residues 1-41 (MPRSRGGRAAPGQASRWSGWRAPGRLLPLLPALCCLAAAAG). A propeptide spanning residues 42–128 (AGKPAGADAP…HLSRRRRNKR (87 aa)) is cleaved from the precursor. Over 42–575 (AGKPAGADAP…IDDVPGSVNA (534 aa)) the chain is Extracellular. The Cysteine switch motif lies at 110–117 (PRCGVPDH). Positions 112 and 255 each coordinate Zn(2+). The active site involves Glu-256. Zn(2+) is bound by residues His-259 and His-265. The segment at 296 to 352 (QKIYGPPAEPLEPTRPLPTLPVRRIHSPSERKHERHPRPPRPPLGDRPSTPGAKPNI) is disordered. Positions 302–314 (PAEPLEPTRPLPT) are enriched in pro residues. 4 Hemopexin repeats span residues 350–398 (PNIC…WKGL), 399–444 (PARI…GSCL), 446–494 (REGI…KGIP), and 495–542 (QAPQ…WMGC). Residues Cys-353 and Cys-542 are joined by a disulfide bond. Residues 576 to 596 (VAVVVPCTLSLCLLVLLYTIF) traverse the membrane as a helical segment. The Cytoplasmic portion of the chain corresponds to 597–618 (QFKNKAGPQPVTYYKRPVQEWV). A PDZ-binding motif is present at residues 616 to 618 (EWV).

The protein belongs to the peptidase M10A family. Interacts with GRIP1 and GRIP2. Interacts (via PDZ-binding motif) with APBA3 (via PDZ domain). It depends on Zn(2+) as a cofactor. Ca(2+) is required as a cofactor. In terms of processing, cleaved by a furin endopeptidase in the trans-Golgi network. As to expression, mainly expressed in neuronal cells of both central and peripheral nervous systems. Expressed by CGRP-containing peptidergic nociceptors in dorsal root ganglia. Expressed in adult neural stem cell and ependymocytes. Expressed at low level in testis.

Its subcellular location is the cell membrane. It localises to the golgi apparatus. It is found in the trans-Golgi network membrane. The protein localises to the secreted. The protein resides in the extracellular space. Its subcellular location is the extracellular matrix. In terms of biological role, metalloprotease that mediates cleavage of N-cadherin (CDH2) and acts as a regulator of neuro-immune interactions and neural stem cell quiescence. Involved in cell-cell interactions between nociceptive neurites and mast cells, possibly by mediating cleavage of CDH2, thereby acting as a mediator of peripheral thermal nociception and inflammatory hyperalgesia. Key regulator of neural stem cells quiescence by mediating cleavage of CDH2, affecting CDH2-mediated anchorage of neural stem cells to ependymocytes in the adult subependymal zone, leading to modulate their quiescence. May play a role in axonal growth. Able to activate progelatinase A. May also be a proteoglycanase involved in degradation of proteoglycans, such as dermatan sulfate and chondroitin sulfate proteoglycans. Cleaves partially fibronectin, but not collagen type I, nor laminin. In Mus musculus (Mouse), this protein is Matrix metalloproteinase-24 (Mmp24).